We begin with the raw amino-acid sequence, 258 residues long: Hemin import ATP-binding protein HmuV (258 aa).

The ABC transporter domain maps to 2 to 242; it reads LTAEKLCVER…SKIEELYDFP (241 aa). 34-41 is an ATP binding site; the sequence is GANGAGKS.

It belongs to the ABC transporter superfamily. Heme (hemin) importer (TC 3.A.1.14.5) family. In terms of assembly, the complex is composed of two ATP-binding proteins (HmuV), two transmembrane proteins (HmuU) and a solute-binding protein (HmuT).

It is found in the cell inner membrane. In terms of biological role, part of the ABC transporter complex HmuTUV involved in hemin import. Responsible for energy coupling to the transport system. In Hydrogenovibrio crunogenus (strain DSM 25203 / XCL-2) (Thiomicrospira crunogena), this protein is Hemin import ATP-binding protein HmuV.